Reading from the N-terminus, the 474-residue chain is MTKKLHIKTWGCQMNEYDSSKMADLLDATHGYQLTEVAEEADVLLLNTCSIREKAQEKVFHQLGRWKLLKEKNPDLIIGVGGCVASQEGDHIRQRAHYVDIIFGPQTLHRLPEMINSVRGDRSPVVDISFPEIEKFDRLPEPRAEGPTAFVSIMEGCNKYCTYCVVPYTRGEEVSRPSDDILFEIAQLAAQGVREVNLLGQNVNAWRGENYDGTTGSFADLLRLVAAIDGIDRIRFTTSHPIEFTDDIIEVYRDTPELVSFLHLPVQSGADRVLNLMGRTHTALEYKAIIRKLRAARPDIQISSDFIVGFPGETTQDFEQTMKLIADVNFDMSYSFIFSARPGTPAADMVDDVPEEEKKQRLYILQERINQQAMAWSRRMLGTVQRILVEGTSRKSIMELSGRTENNRVVNFEGTPEMIGKFVDVEITDVYTNSLRGKVVRTEDEMGLRVAETPESVIARTRKENEIGVGFYQP.

Residues 3 to 120 form the MTTase N-terminal domain; it reads KKLHIKTWGC…LPEMINSVRG (118 aa). The [4Fe-4S] cluster site is built by C12, C49, C83, C157, C161, and C164. Residues 143 to 375 enclose the Radical SAM core domain; sequence RAEGPTAFVS…QERINQQAMA (233 aa). A TRAM domain is found at 378-441; sequence RRMLGTVQRI…TNSLRGKVVR (64 aa).

Belongs to the methylthiotransferase family. MiaB subfamily. As to quaternary structure, monomer. The cofactor is [4Fe-4S] cluster.

It is found in the cytoplasm. The enzyme catalyses N(6)-dimethylallyladenosine(37) in tRNA + (sulfur carrier)-SH + AH2 + 2 S-adenosyl-L-methionine = 2-methylsulfanyl-N(6)-dimethylallyladenosine(37) in tRNA + (sulfur carrier)-H + 5'-deoxyadenosine + L-methionine + A + S-adenosyl-L-homocysteine + 2 H(+). Its function is as follows. Catalyzes the methylthiolation of N6-(dimethylallyl)adenosine (i(6)A), leading to the formation of 2-methylthio-N6-(dimethylallyl)adenosine (ms(2)i(6)A) at position 37 in tRNAs that read codons beginning with uridine. In Citrobacter koseri (strain ATCC BAA-895 / CDC 4225-83 / SGSC4696), this protein is tRNA-2-methylthio-N(6)-dimethylallyladenosine synthase.